Consider the following 417-residue polypeptide: Phosphoglycerate kinase 2 (417 aa).

Ser-2 carries the post-translational modification N-acetylserine. Residues Ser-2 and Ser-4 each carry the phosphoserine modification. Lys-11 bears the N6-acetyllysine mark. (2R)-3-phosphoglycerate contacts are provided by Val-23, Asp-24, Phe-25, Asn-26, Gln-38, and Arg-39. The residue at position 48 (Lys-48) is an N6-acetyllysine. Residues Ser-62, His-63, Gly-65, and Arg-66 each coordinate (2R)-3-phosphoglycerate. N6-acetyllysine occurs at positions 75, 86, and 97. Residues Leu-122 and Arg-123 each coordinate (2R)-3-phosphoglycerate. Lys-131 and Lys-146 each carry N6-acetyllysine. Residues His-170 and Arg-171 each coordinate (2R)-3-phosphoglycerate. Tyr-196 is subject to Phosphotyrosine. Residue Lys-199 is modified to N6-acetyllysine. Residue Gly-214 participates in ADP binding. Gly-214 is a binding site for CDP. Residues Ala-215 and Lys-216 each contribute to the AMP site. Ala-215 is a binding site for ATP. Ala-215 lines the Mg(2+) pocket. The Mg(2+) site is built by Ala-218 and Asp-219. Asp-219 is a CDP binding site. An AMP-binding site is contributed by Lys-220. Lys-220 contributes to the ATP binding site. Residue Gly-238 coordinates ADP. Residue Gly-238 participates in CDP binding. Gly-239 serves as a coordination point for AMP. Gly-239 lines the ATP pocket. 2 positions are modified to N6-acetyllysine: Lys-267 and Lys-291. Gly-313 contacts AMP. Position 313 (Gly-313) interacts with ATP. Residues Gly-338, Val-340, and Phe-343 each contribute to the CDP site. Residue Phe-343 coordinates ADP. Residue Glu-344 participates in AMP binding. Residues Glu-344, Asp-375, and Thr-376 each coordinate ATP. Asp-375 provides a ligand contact to Mg(2+).

This sequence belongs to the phosphoglycerate kinase family. As to quaternary structure, monomer. Mg(2+) is required as a cofactor.

The protein resides in the cytoplasm. It catalyses the reaction (2R)-3-phosphoglycerate + ATP = (2R)-3-phospho-glyceroyl phosphate + ADP. It participates in carbohydrate degradation; glycolysis; pyruvate from D-glyceraldehyde 3-phosphate: step 2/5. Functionally, essential for sperm motility and male fertility but is not required for the completion of spermatogenesis. This chain is Phosphoglycerate kinase 2 (PGK2), found in Equus caballus (Horse).